Here is a 76-residue protein sequence, read N- to C-terminus: Senegalin (76 aa).

A signal peptide spans 1-22 (MLSLKKSMLLLFFLGMVSFSLA). Positions 23 to 55 (NKRSDGKRADEEGEDKRADEEGEDKRADEEGED) are excised as a propeptide. The disordered stretch occupies residues 24–54 (KRSDGKRADEEGEDKRADEEGEDKRADEEGE). Leu-75 carries the post-translational modification Leucine amide.

In terms of tissue distribution, expressed by the skin glands.

The protein localises to the secreted. Antimicrobial peptide with activity against the Gram-positive bacterium S.aureus NCTC 10788 (MIC=50 um) and the yeast C.albicans NCPF 1467 (MIC=150 uM). Ineffective against the Gram-negative bacterium E.coli NCTC 10418. Induces a dose-dependent contraction of rat urinary bladder smooth muscle (EC50=2.9 nM) and a dose-dependent relaxation of rat tail artery smooth muscle (EC50=37.7 nM). The sequence is that of Senegalin from Kassina senegalensis (Senegal running frog).